We begin with the raw amino-acid sequence, 230 residues long: Cytidylate kinase (230 aa).

12-20 (GPSGAGKGT) provides a ligand contact to ATP.

Belongs to the cytidylate kinase family. Type 1 subfamily.

Its subcellular location is the cytoplasm. It carries out the reaction CMP + ATP = CDP + ADP. The enzyme catalyses dCMP + ATP = dCDP + ADP. This chain is Cytidylate kinase, found in Aeromonas hydrophila subsp. hydrophila (strain ATCC 7966 / DSM 30187 / BCRC 13018 / CCUG 14551 / JCM 1027 / KCTC 2358 / NCIMB 9240 / NCTC 8049).